Consider the following 126-residue polypeptide: Large ribosomal subunit protein bL12 (126 aa).

Belongs to the bacterial ribosomal protein bL12 family. As to quaternary structure, homodimer. Part of the ribosomal stalk of the 50S ribosomal subunit. Forms a multimeric L10(L12)X complex, where L10 forms an elongated spine to which 2 to 4 L12 dimers bind in a sequential fashion. Binds GTP-bound translation factors.

Functionally, forms part of the ribosomal stalk which helps the ribosome interact with GTP-bound translation factors. Is thus essential for accurate translation. This is Large ribosomal subunit protein bL12 from Geobacter sp. (strain M21).